The following is a 124-amino-acid chain: MALKIRLARGGSKKRPYYQIVVADARSPRDGRFLEKIGSWNPMLSKDDEKRIELNAERVSHWIAQGAQPTDRVLRFLDQAGLAKRPARSNPTKAVPGKKAQERAAEAKQKAEDAAAAAAESAAE.

The tract at residues Leu-82–Glu-124 is disordered. A compositionally biased stretch (basic and acidic residues) spans Lys-99–Asp-113. Residues Ala-114 to Glu-124 are compositionally biased toward low complexity.

It belongs to the bacterial ribosomal protein bS16 family.

This is Small ribosomal subunit protein bS16 from Sinorhizobium fredii (strain NBRC 101917 / NGR234).